The primary structure comprises 616 residues: Chaperone protein DnaK (616 aa).

Thr174 is subject to Phosphothreonine; by autocatalysis. A disordered region spans residues 575–616 (QQTQGAQSDPGAAGFGGQQEAPGAGQDENVVDADYKVVDDDK). The span at 607-616 (ADYKVVDDDK) shows a compositional bias: basic and acidic residues.

The protein belongs to the heat shock protein 70 family.

Acts as a chaperone. The chain is Chaperone protein DnaK from Ruminiclostridium cellulolyticum (strain ATCC 35319 / DSM 5812 / JCM 6584 / H10) (Clostridium cellulolyticum).